A 180-amino-acid chain; its full sequence is Flavin prenyltransferase UbiX (180 aa).

FMN-binding positions include Gly9–Ser11, Ser33, Ser84–Thr87, and Arg119. 2 residues coordinate dimethylallyl phosphate: Tyr149 and Arg165.

This sequence belongs to the UbiX/PAD1 family.

The enzyme catalyses dimethylallyl phosphate + FMNH2 = prenylated FMNH2 + phosphate. Functionally, flavin prenyltransferase that catalyzes the synthesis of the prenylated FMN cofactor (prenyl-FMN) for 4-hydroxy-3-polyprenylbenzoic acid decarboxylase UbiD. The prenyltransferase is metal-independent and links a dimethylallyl moiety from dimethylallyl monophosphate (DMAP) to the flavin N5 and C6 atoms of FMN. The sequence is that of Flavin prenyltransferase UbiX from Thermoplasma acidophilum (strain ATCC 25905 / DSM 1728 / JCM 9062 / NBRC 15155 / AMRC-C165).